The chain runs to 270 residues: 2-dehydro-3-deoxyphosphooctonate aldolase (270 aa).

This sequence belongs to the KdsA family.

It localises to the cytoplasm. It carries out the reaction D-arabinose 5-phosphate + phosphoenolpyruvate + H2O = 3-deoxy-alpha-D-manno-2-octulosonate-8-phosphate + phosphate. The protein operates within carbohydrate biosynthesis; 3-deoxy-D-manno-octulosonate biosynthesis; 3-deoxy-D-manno-octulosonate from D-ribulose 5-phosphate: step 2/3. Its pathway is bacterial outer membrane biogenesis; lipopolysaccharide biosynthesis. The polypeptide is 2-dehydro-3-deoxyphosphooctonate aldolase (Helicobacter hepaticus (strain ATCC 51449 / 3B1)).